Consider the following 348-residue polypeptide: Phospho-2-dehydro-3-deoxyheptonate aldolase, Trp-sensitive (348 aa).

Belongs to the class-I DAHP synthase family.

The catalysed reaction is D-erythrose 4-phosphate + phosphoenolpyruvate + H2O = 7-phospho-2-dehydro-3-deoxy-D-arabino-heptonate + phosphate. The protein operates within metabolic intermediate biosynthesis; chorismate biosynthesis; chorismate from D-erythrose 4-phosphate and phosphoenolpyruvate: step 1/7. Its function is as follows. Stereospecific condensation of phosphoenolpyruvate (PEP) and D-erythrose-4-phosphate (E4P) giving rise to 3-deoxy-D-arabino-heptulosonate-7-phosphate (DAHP). The chain is Phospho-2-dehydro-3-deoxyheptonate aldolase, Trp-sensitive (aroH) from Buchnera aphidicola subsp. Baizongia pistaciae (strain Bp).